A 187-amino-acid polypeptide reads, in one-letter code: Interferon alpha-3 (187 aa).

Positions 1-23 (MALPCSFSVALVLLSCHSLCCLA) are cleaved as a signal peptide. 2 disulfides stabilise this stretch: C24–C122 and C52–C160. 2 N-linked (GlcNAc...) asparagine glycosylation sites follow: N94 and N101.

This sequence belongs to the alpha/beta interferon family.

Its subcellular location is the secreted. In terms of biological role, produced by macrophages, IFN-alpha have antiviral activities. Interferon stimulates the production of two enzymes: a protein kinase and an oligoadenylate synthetase. In Canis lupus familiaris (Dog), this protein is Interferon alpha-3.